Here is a 478-residue protein sequence, read N- to C-terminus: Ankyrin repeat and BTB/POZ domain-containing protein 1 (478 aa).

2 ANK repeats span residues 1–31 (MDTS…EVNV) and 35–64 (WDST…RCEA). BTB domains are found at residues 115 to 182 (SDVV…DIGV) and 272 to 346 (PDIC…ELSP). The stretch at 451-477 (VQTYSAIEEAQQRLRALEDLLVSIGLD) forms a coiled coil.

In terms of tissue distribution, ubiquitously expressed in all fetal tissues examined including heart, brain, liver, and kidney. Also expressed at lower levels in both adult heart and hypertrophic heart.

Its subcellular location is the cytoplasm. Functionally, may act as a mediator of the PTEN growth-suppressive signaling pathway. May play a role in developmental processes. The protein is Ankyrin repeat and BTB/POZ domain-containing protein 1 of Homo sapiens (Human).